We begin with the raw amino-acid sequence, 371 residues long: Cyanide hydratase (371 aa).

The 280-residue stretch at 6 to 285 (YKAAAVTSEP…DGLLYVDIDL (280 aa)) folds into the CN hydrolase domain. Catalysis depends on Glu-46, which acts as the Proton acceptor. The active site involves Lys-128. Cys-163 functions as the Nucleophile in the catalytic mechanism. The span at 339 to 353 (GLNRPLDPPKDERHG) shows a compositional bias: basic and acidic residues. The segment at 339 to 371 (GLNRPLDPPKDERHGIVGVAGQKSAEQRKAGDL) is disordered.

Belongs to the carbon-nitrogen hydrolase superfamily. Nitrilase family. Oligomer of dimers, forming left-handed helical fibers.

It carries out the reaction formamide = hydrogen cyanide + H2O. Its function is as follows. Catalyzes the hydration of cyanide to formamide. Degradation of cyanide may be important for plant pathogenic fungi in infection of cyanogenic plants. Also acts on 2-cyanopyridine, fumaronitrile and benzonitrile, albeit at a lower rate. The chain is Cyanide hydratase (nit) from Stereum hirsutum (strain FP-91666) (White-rot fungus).